A 696-amino-acid chain; its full sequence is DNA ligase (696 aa).

NAD(+)-binding positions include 36-40, 85-86, and Glu123; these read DAEYD and SL. The active-site N6-AMP-lysine intermediate is the Lys125. Positions 146, 181, 319, and 343 each coordinate NAD(+). Residues Cys437, Cys440, Cys455, and Cys461 each contribute to the Zn(2+) site. Residues 618–696 form the BRCT domain; sequence PEGTSLAGKT…EDGLKALLGL (79 aa).

The protein belongs to the NAD-dependent DNA ligase family. LigA subfamily. Mg(2+) is required as a cofactor. Mn(2+) serves as cofactor.

It carries out the reaction NAD(+) + (deoxyribonucleotide)n-3'-hydroxyl + 5'-phospho-(deoxyribonucleotide)m = (deoxyribonucleotide)n+m + AMP + beta-nicotinamide D-nucleotide.. Functionally, DNA ligase that catalyzes the formation of phosphodiester linkages between 5'-phosphoryl and 3'-hydroxyl groups in double-stranded DNA using NAD as a coenzyme and as the energy source for the reaction. It is essential for DNA replication and repair of damaged DNA. In Bordetella bronchiseptica (strain ATCC BAA-588 / NCTC 13252 / RB50) (Alcaligenes bronchisepticus), this protein is DNA ligase.